The sequence spans 446 residues: Phosphoglucosamine mutase (446 aa).

Ser-99 (phosphoserine intermediate) is an active-site residue. Residues Ser-99, Asp-242, Asp-244, and Asp-246 each coordinate Mg(2+). The residue at position 99 (Ser-99) is a Phosphoserine.

This sequence belongs to the phosphohexose mutase family. It depends on Mg(2+) as a cofactor. In terms of processing, activated by phosphorylation.

The enzyme catalyses alpha-D-glucosamine 1-phosphate = D-glucosamine 6-phosphate. Its function is as follows. Catalyzes the conversion of glucosamine-6-phosphate to glucosamine-1-phosphate. The chain is Phosphoglucosamine mutase from Wolinella succinogenes (strain ATCC 29543 / DSM 1740 / CCUG 13145 / JCM 31913 / LMG 7466 / NCTC 11488 / FDC 602W) (Vibrio succinogenes).